A 256-amino-acid polypeptide reads, in one-letter code: Adenylate kinase (256 aa).

An ATP-binding site is contributed by 49-54 (GAGKGT). The tract at residues 69-98 (ATGDMLRDQVEKKTPLGIAAKKIMDAGGLV) is NMP. AMP is bound by residues threonine 70, arginine 75, 96–98 (GLV), 125–128 (GFPR), and glutamine 132. An LID region spans residues 166–203 (GRLIHPASGRSYHKIFNPPKKAGIDDLTGEPLIQRSDD). ATP-binding positions include arginine 167 and 176–177 (SY). AMP-binding residues include arginine 200 and arginine 211. Glutamine 239 is a binding site for ATP.

It belongs to the adenylate kinase family. AK2 subfamily. Monomer.

It localises to the cytoplasm. Its subcellular location is the cytosol. The protein resides in the mitochondrion intermembrane space. It catalyses the reaction AMP + ATP = 2 ADP. Its function is as follows. Catalyzes the reversible transfer of the terminal phosphate group between ATP and AMP. Plays an important role in cellular energy homeostasis and in adenine nucleotide metabolism. Adenylate kinase activity is critical for regulation of the phosphate utilization and the AMP de novo biosynthesis pathways. The polypeptide is Adenylate kinase (Coprinopsis cinerea (strain Okayama-7 / 130 / ATCC MYA-4618 / FGSC 9003) (Inky cap fungus)).